A 61-amino-acid chain; its full sequence is Large ribosomal subunit protein uL30 (61 aa).

It belongs to the universal ribosomal protein uL30 family. Part of the 50S ribosomal subunit.

In Thermosipho africanus (strain TCF52B), this protein is Large ribosomal subunit protein uL30.